The sequence spans 41 residues: Large ribosomal subunit protein bL36A (41 aa).

It belongs to the bacterial ribosomal protein bL36 family.

This chain is Large ribosomal subunit protein bL36A, found in Vibrio cholerae serotype O1 (strain ATCC 39541 / Classical Ogawa 395 / O395).